The chain runs to 210 residues: Chaperone protein TorD (210 aa).

Belongs to the TorD/DmsD family. TorD subfamily.

Its subcellular location is the cytoplasm. Involved in the biogenesis of TorA. Acts on TorA before the insertion of the molybdenum cofactor and, as a result, probably favors a conformation of the apoenzyme that is competent for acquiring the cofactor. This chain is Chaperone protein TorD, found in Salmonella arizonae (strain ATCC BAA-731 / CDC346-86 / RSK2980).